We begin with the raw amino-acid sequence, 172 residues long: Keratin-associated protein 13-3 (172 aa).

5 tandem repeats follow at residues 46–55 (CQLGSSLYRG), 56–65 (CQETCWRPNS), 66–75 (CQTLCVESSP), 76–85 (CHTSCYYPRT), and 92–101 (CLTMHVGSRG). Residues 46-101 (CQLGSSLYRGCQETCWRPNSCQTLCVESSPCHTSCYYPRTHMLCNSCLTMHVGSRG) are 5 X 10 AA approximate repeats.

The protein belongs to the PMG family. Interacts with hair keratins.

Functionally, in the hair cortex, hair keratin intermediate filaments are embedded in an interfilamentous matrix, consisting of hair keratin-associated proteins (KRTAP), which are essential for the formation of a rigid and resistant hair shaft through their extensive disulfide bond cross-linking with abundant cysteine residues of hair keratins. The matrix proteins include the high-sulfur and high-glycine-tyrosine keratins. The polypeptide is Keratin-associated protein 13-3 (KRTAP13-3) (Homo sapiens (Human)).